A 167-amino-acid chain; its full sequence is Signal peptidase complex catalytic subunit SEC11 (167 aa).

Residues Met1–Asn12 are Cytoplasmic-facing. The chain crosses the membrane as a helical; Signal-anchor for type II membrane protein span at residues Leu13–Ile30. The Lumenal portion of the chain corresponds to Thr31–Glu167. Catalysis depends on charge relay system residues Ser44, His83, and Asp109. Residues Thr153–Leu164 are C-terminal short (CTS) helix.

It belongs to the peptidase S26B family. As to quaternary structure, component of the signal peptidase complex (SPC) composed of a catalytic subunit SEC11 and three accessory subunits SPC1, SPC2 and SPC3. The complex induces a local thinning of the ER membrane which is used to measure the length of the signal peptide (SP) h-region of protein substrates. This ensures the selectivity of the complex towards h-regions shorter than 18-20 amino acids. SPC associates with the translocon complex.

It is found in the endoplasmic reticulum membrane. The enzyme catalyses Cleavage of hydrophobic, N-terminal signal or leader sequences from secreted and periplasmic proteins.. In terms of biological role, catalytic component of the signal peptidase complex (SPC) which catalyzes the cleavage of N-terminal signal sequences from nascent proteins as they are translocated into the lumen of the endoplasmic reticulum. Specifically cleaves N-terminal signal peptides that contain a hydrophobic alpha-helix (h-region) shorter than 18-20 amino acids. In Debaryomyces hansenii (strain ATCC 36239 / CBS 767 / BCRC 21394 / JCM 1990 / NBRC 0083 / IGC 2968) (Yeast), this protein is Signal peptidase complex catalytic subunit SEC11 (SEC11).